Consider the following 447-residue polypeptide: Trichothecene C-3 esterase (447 aa).

The first 22 residues, 1–22 (MALNRLVFSLSLWLGFIGAAQA), serve as a signal peptide directing secretion. N59, N66, N136, and N189 each carry an N-linked (GlcNAc...) asparagine glycan. S202 acts as the Charge relay system in catalysis. 3 N-linked (GlcNAc...) asparagine glycosylation sites follow: N238, N284, and N314. Catalysis depends on charge relay system residues D352 and H384. 2 N-linked (GlcNAc...) asparagine glycosylation sites follow: N389 and N423.

The protein belongs to the AB hydrolase superfamily. Lipase family.

It functions in the pathway sesquiterpene biosynthesis; trichothecene biosynthesis. Its function is as follows. Trichothecene C-3 esterase; part of the core gene cluster that mediates the biosynthesis of trichothecenes, a very large family of chemically related bicyclic sesquiterpene compounds acting as mycotoxins, including T2-toxin. The biosynthesis of trichothecenes begins with the cyclization of farnesyl diphosphate to trichodiene and is catalyzed by the trichodiene synthase TRI5. Trichodiene undergoes a series of oxygenations catalyzed by the cytochrome P450 monooxygenase TRI4. TRI4 controls the addition of four oxygens at C-2, C-3, C-11, and the C-12, C-13-epoxide to form the intermediate isotrichotriol. Isotrichotriol then undergoes a non-enzymatic isomerization and cyclization to form isotrichodermol. During this process, the oxygen at the C-2 position becomes the pyran ring oxygen and the hydroxyl group at C-11 is lost. More complex type A trichothecenes are built by modifying isotrichodermol through a series of paired hydroxylation and acetylation or acylation steps. Isotrichodermol is converted to isotrichodermin by the acetyltransferase TRI101. TRI101 encodes a C-3 transacetylase that acts as a self-protection or resistance factor during biosynthesis and that the presence of a free C-3 hydroxyl group is a key component of Fusarium trichothecene phytotoxicity. A second hydroxyl group is added to C-15 by the trichothecene C-15 hydroxylase TRI11, producing 15-decalonectrin, which is then acetylated by TRI3, producing calonectrin. A third hydroxyl group is added at C-4 by the cytochrome P450 monooxygenase TRI13, converting calonectrin to 3,15-diacetoxyspirpenol, which is subsequently acetylated by the acetyltransferase TRI7. A fourth hydroxyl group is added to C-8 by the cytochrome P450 monooxygenase TRI1, followed by the addition of an isovaleryl moiety by TRI16. Finally, the acetyl group is removed from the C-3 position by the trichothecene C-3 esterase TRI8 to produce T-2 toxin. This is Trichothecene C-3 esterase from Fusarium sporotrichioides.